A 639-amino-acid chain; its full sequence is Protein zwilch homolog (639 aa).

The span at 76-95 shows a compositional bias: basic and acidic residues; that stretch reads QKTSSLLNRRENKKTIKSEK. The tract at residues 76–116 is disordered; sequence QKTSSLLNRRENKKTIKSEKEDESMDMETAEGDKENTVSET. Residues 96–105 are compositionally biased toward acidic residues; sequence EDESMDMETA.

The protein belongs to the ZWILCH family. In terms of assembly, component of the RZZ complex composed of rod-1, czw-1 and zwl-1. Interacts with the spindly-like protein spdl-1. Interacts with NDC80 complex component ndc-80.

The protein localises to the cytoplasm. It is found in the cell cortex. The protein resides in the chromosome. It localises to the centromere. Its subcellular location is the kinetochore. The protein localises to the cytoskeleton. It is found in the spindle. Functionally, essential component of the mitotic checkpoint, which prevents cells from prematurely exiting mitosis. Required for chromosome segregation, the assembly of the dynein-dynactin and mdf-1-mdf-2 complexes onto kinetochores and spindle pole separation. Its function related to the spindle assembly machinery and kinetochore-microtubule attachments likely depends on its association in the mitotic RZZ complex. The RZZ complex recruits the spindly-like protein spdl-1 to kinetochores. To prevent irregular chromosome segregation, the complex also inhibits the attachment of the kinetochore-associated NDC80 complex to microtubules. The recruitment of spdl-1 to kinetochores relieves this inhibition. Required for embryonic development. In Caenorhabditis briggsae, this protein is Protein zwilch homolog (zwl-1).